A 356-amino-acid chain; its full sequence is S-adenosylmethionine:tRNA ribosyltransferase-isomerase (356 aa).

It belongs to the QueA family. Monomer.

Its subcellular location is the cytoplasm. The catalysed reaction is 7-aminomethyl-7-carbaguanosine(34) in tRNA + S-adenosyl-L-methionine = epoxyqueuosine(34) in tRNA + adenine + L-methionine + 2 H(+). The protein operates within tRNA modification; tRNA-queuosine biosynthesis. Its function is as follows. Transfers and isomerizes the ribose moiety from AdoMet to the 7-aminomethyl group of 7-deazaguanine (preQ1-tRNA) to give epoxyqueuosine (oQ-tRNA). This chain is S-adenosylmethionine:tRNA ribosyltransferase-isomerase, found in Nitrosospira multiformis (strain ATCC 25196 / NCIMB 11849 / C 71).